Reading from the N-terminus, the 335-residue chain is Biotin synthase (335 aa).

The Radical SAM core domain maps to 43–269 (YFGKKVKLNM…INPTKEIRIA (227 aa)). C61, C65, and C68 together coordinate [4Fe-4S] cluster. [2Fe-2S] cluster-binding residues include C104, C137, C197, and R267.

The protein belongs to the radical SAM superfamily. Biotin synthase family. Homodimer. Requires [4Fe-4S] cluster as cofactor. [2Fe-2S] cluster is required as a cofactor.

The catalysed reaction is (4R,5S)-dethiobiotin + (sulfur carrier)-SH + 2 reduced [2Fe-2S]-[ferredoxin] + 2 S-adenosyl-L-methionine = (sulfur carrier)-H + biotin + 2 5'-deoxyadenosine + 2 L-methionine + 2 oxidized [2Fe-2S]-[ferredoxin]. It participates in cofactor biosynthesis; biotin biosynthesis; biotin from 7,8-diaminononanoate: step 2/2. Its function is as follows. Catalyzes the conversion of dethiobiotin (DTB) to biotin by the insertion of a sulfur atom into dethiobiotin via a radical-based mechanism. The polypeptide is Biotin synthase (Staphylococcus aureus (strain MSSA476)).